A 136-amino-acid polypeptide reads, in one-letter code: Flagellar assembly factor FliW 2 (136 aa).

This sequence belongs to the FliW family. Interacts with translational regulator CsrA and flagellin(s).

The protein resides in the cytoplasm. Functionally, acts as an anti-CsrA protein, binds CsrA and prevents it from repressing translation of its target genes, one of which is flagellin. Binds to flagellin and participates in the assembly of the flagellum. This Wolinella succinogenes (strain ATCC 29543 / DSM 1740 / CCUG 13145 / JCM 31913 / LMG 7466 / NCTC 11488 / FDC 602W) (Vibrio succinogenes) protein is Flagellar assembly factor FliW 2.